Reading from the N-terminus, the 229-residue chain is 2-C-methyl-D-erythritol 4-phosphate cytidylyltransferase (229 aa).

Belongs to the IspD/TarI cytidylyltransferase family. IspD subfamily.

The enzyme catalyses 2-C-methyl-D-erythritol 4-phosphate + CTP + H(+) = 4-CDP-2-C-methyl-D-erythritol + diphosphate. Its pathway is isoprenoid biosynthesis; isopentenyl diphosphate biosynthesis via DXP pathway; isopentenyl diphosphate from 1-deoxy-D-xylulose 5-phosphate: step 2/6. Functionally, catalyzes the formation of 4-diphosphocytidyl-2-C-methyl-D-erythritol from CTP and 2-C-methyl-D-erythritol 4-phosphate (MEP). This is 2-C-methyl-D-erythritol 4-phosphate cytidylyltransferase from Clostridium botulinum (strain Langeland / NCTC 10281 / Type F).